Here is a 138-residue protein sequence, read N- to C-terminus: ATP synthase epsilon chain (138 aa).

The protein belongs to the ATPase epsilon chain family. F-type ATPases have 2 components, CF(1) - the catalytic core - and CF(0) - the membrane proton channel. CF(1) has five subunits: alpha(3), beta(3), gamma(1), delta(1), epsilon(1). CF(0) has three main subunits: a, b and c.

It is found in the cell inner membrane. Its function is as follows. Produces ATP from ADP in the presence of a proton gradient across the membrane. The sequence is that of ATP synthase epsilon chain from Cupriavidus pinatubonensis (strain JMP 134 / LMG 1197) (Cupriavidus necator (strain JMP 134)).